The following is a 229-amino-acid chain: Platelet-activating factor acetylhydrolase IB subunit alpha2 (229 aa).

Residues serine 48, aspartate 193, and histidine 196 contribute to the active site.

This sequence belongs to the 'GDSL' lipolytic enzyme family. Platelet-activating factor acetylhydrolase IB beta/gamma subunits subfamily. Forms a catalytic dimer which is either homodimer (alpha2/alpha2 homodimer) or heterodimer with PAFAH1B3 (alpha2/alpha1 heterodimer). Component of the cytosolic (PAF-AH (I)) heterotetrameric enzyme, which is composed of PAFAH1B1 (beta), PAFAH1B2 (alpha2) and PAFAH1B3 (alpha1) subunits. The catalytic activity of the enzyme resides in the alpha1 (PAFAH1B3) and alpha2 (PAFAH1B2) subunits, whereas the beta subunit (PAFAH1B1) has regulatory activity. Trimer formation is not essential for the catalytic activity.

The protein resides in the cytoplasm. The enzyme catalyses a 1-O-alkyl-2-acetyl-sn-glycero-3-phosphocholine + H2O = a 1-O-alkyl-sn-glycero-3-phosphocholine + acetate + H(+). The catalysed reaction is 1-O-hexadecyl-2-acetyl-sn-glycero-3-phosphocholine + H2O = 1-O-hexadecyl-sn-glycero-3-phosphocholine + acetate + H(+). It catalyses the reaction 1-O-hexadecyl-2-acetyl-sn-glycero-3-phosphate + H2O = 1-O-hexadecyl-sn-glycero-3-phosphate + acetate + H(+). It carries out the reaction 1-O-hexadecyl-2-acetyl-sn-glycero-3-phosphoethanolamine + H2O = 1-O-hexadecyl-sn-glycero-3-phosphoethanolamine + acetate + H(+). Alpha2 catalytic subunit of the cytosolic type I platelet-activating factor (PAF) acetylhydrolase (PAF-AH (I)) heterotetrameric enzyme that catalyzes the hydrolyze of the acetyl group at the sn-2 position of PAF and its analogs and modulates the action of PAF. The protein is Platelet-activating factor acetylhydrolase IB subunit alpha2 (PAFAH1B2) of Gallus gallus (Chicken).